The sequence spans 197 residues: Small ribosomal subunit protein uS4B (197 aa).

Residues 88-151 form the S4 RNA-binding domain; sequence CRLDNIAYRI…RKNDEFADNF (64 aa).

The protein belongs to the universal ribosomal protein uS4 family. Part of the 30S ribosomal subunit. Contacts protein S5. The interaction surface between S4 and S5 is involved in control of translational fidelity.

Its function is as follows. One of the primary rRNA binding proteins, it binds directly to 16S rRNA where it nucleates assembly of the body of the 30S subunit. In terms of biological role, with S5 and S12 plays an important role in translational accuracy. The protein is Small ribosomal subunit protein uS4B of Clostridium botulinum (strain Hall / ATCC 3502 / NCTC 13319 / Type A).